The following is a 431-amino-acid chain: Enolase (431 aa).

Glutamine 163 contributes to the (2R)-2-phosphoglycerate binding site. Residue glutamate 205 is the Proton donor of the active site. The Mg(2+) site is built by aspartate 242, glutamate 288, and aspartate 315. Positions 340, 369, 370, and 391 each coordinate (2R)-2-phosphoglycerate. The Proton acceptor role is filled by lysine 340.

It belongs to the enolase family. It depends on Mg(2+) as a cofactor.

The protein localises to the cytoplasm. It localises to the secreted. It is found in the cell surface. It carries out the reaction (2R)-2-phosphoglycerate = phosphoenolpyruvate + H2O. Its pathway is carbohydrate degradation; glycolysis; pyruvate from D-glyceraldehyde 3-phosphate: step 4/5. Functionally, catalyzes the reversible conversion of 2-phosphoglycerate (2-PG) into phosphoenolpyruvate (PEP). It is essential for the degradation of carbohydrates via glycolysis. This chain is Enolase, found in Bacillus mycoides (strain KBAB4) (Bacillus weihenstephanensis).